Here is a 153-residue protein sequence, read N- to C-terminus: Pheromone-binding protein Gp-9 (153 aa).

The N-terminal stretch at Met-1–Ala-19 is a signal peptide. Disulfide bonds link Cys-37–Cys-77, Cys-73–Cys-129, and Cys-118–Cys-138.

The protein belongs to the PBP/GOBP family. As to quaternary structure, homodimer.

It localises to the secreted. Colony queen number, a major feature of social organization, is associated with worker genotype for Gp-9. Colonies are headed by either a single reproductive queen (monogyne form) or multiple queens (polygyne form). Differences in worker Gp-9 genotypes between social forms may cause differences in workers' abilities to recognize queens and regulate their numbers. This chain is Pheromone-binding protein Gp-9, found in Solenopsis daguerrei (Workerless parasitic ant).